Reading from the N-terminus, the 307-residue chain is Atrochrysone carboxyl ACP thioesterase (307 aa).

His-104, His-106, Asp-108, and His-109 together coordinate Zn(2+). The active-site Proton donor/acceptor is the Asp-108.

The protein belongs to the metallo-beta-lactamase superfamily. Requires Zn(2+) as cofactor.

The catalysed reaction is atrochrysone carboxyl-[ACP] + H2O = atrochrysone carboxylate + holo-[ACP] + H(+). It participates in secondary metabolite biosynthesis. In terms of biological role, atrochrysone carboxyl ACP thioesterase; part of the gene cluster that mediates the biosynthesis of monodictyphenone, a prenyl xanthone derivative. The pathway begins with the synthesis of atrochrysone thioester by the polyketide synthase (PKS) mdpG. The atrochrysone carboxyl ACP thioesterase mdpF then breaks the thioester bond and releases the atrochrysone carboxylic acid from mdpG. The atrochrysone carboxylic acid is then converted to atrochrysone which is further transformed into emodin anthrone. The next step is performed by the anthrone oxygenase mdpH that catalyzes the oxidation of emodinanthrone to emodin. Emodin is further modified to yield monodictyphenone via several steps involving mdpB, mdpC mdpJ, mdpK and mdpL. The short chain dehydrogenase mdpC converts the tautomers of emodin hydroquinone into the 3-hydroxy-3,4-dihydroan-thracen-1(2H)-one derivative. These enzymes with xptA, xptB and xptC are also proposed to be involved in the synthesis of shamixanthone from emodin. Especially, direct reduction of emodin by the short chain dehydrogenase mdpC followed by dehydration catalyzed by the scytalone dehydratase-like protein mdpB gives loss of oxygen and formation of chrysophanol intermediate in two simple steps. In Emericella nidulans (strain FGSC A4 / ATCC 38163 / CBS 112.46 / NRRL 194 / M139) (Aspergillus nidulans), this protein is Atrochrysone carboxyl ACP thioesterase.